A 385-amino-acid chain; its full sequence is Acetate kinase (385 aa).

Asn9 is a Mg(2+) binding site. Residue Lys16 coordinates ATP. Residue Arg75 participates in substrate binding. Asp132 functions as the Proton donor/acceptor in the catalytic mechanism. ATP is bound by residues His192–Gly196, Asp266–Arg268, and Gly314–Asn318. Glu368 is a binding site for Mg(2+).

Belongs to the acetokinase family. As to quaternary structure, homodimer. Mg(2+) serves as cofactor. The cofactor is Mn(2+).

It is found in the cytoplasm. The enzyme catalyses acetate + ATP = acetyl phosphate + ADP. The protein operates within metabolic intermediate biosynthesis; acetyl-CoA biosynthesis; acetyl-CoA from acetate: step 1/2. Functionally, catalyzes the formation of acetyl phosphate from acetate and ATP. Can also catalyze the reverse reaction. The polypeptide is Acetate kinase (Mycobacterium bovis (strain ATCC BAA-935 / AF2122/97)).